Reading from the N-terminus, the 673-residue chain is Inactive polyglycylase TTLL10 (673 aa).

Positions 1–132 are disordered; the sequence is MDHSCTRFIH…ADSDDTNAAG (132 aa). The segment covering 8–36 has biased composition (basic residues); sequence FIHRRGPPTRTRAGFKRGKRPRIQQRPRA. Pro residues predominate over residues 52 to 62; the sequence is ASQPGPCPAPG. Residues 89–105 show a composition bias toward basic and acidic residues; sequence PDHDADGHCGPDLEGAE. In terms of domain architecture, TTL spans 155–552; that stretch reads PGPFFYIGGS…TFRKSLRGQK (398 aa). Residues 362-365, lysine 375, and aspartate 377 contribute to the ATP site; that span reads QRYI. The disordered stretch occupies residues 569–673; sequence EADPRPHLGG…EREEPENARP (105 aa). The segment covering 612 to 627 has biased composition (pro residues); sequence PAPPPLVPQRPRPPGP. The span at 661–673 shows a compositional bias: basic and acidic residues; sequence AKEEREEPENARP.

In terms of biological role, inactive polyglycylase. The chain is Inactive polyglycylase TTLL10 from Homo sapiens (Human).